The following is a 139-amino-acid chain: MLMPRRVKHRKQHHPTRRGAAKGGTRLAFGDFGIQAVEAHYVTNRQIESARIAMTRHIKRGGKVWINIYPDRPLTKKPAETRMGSGKGSPEWWIANVKPGRVMFELSGVDETVAREAMRRAMHKLPMKCRFISREAGEF.

Positions 1–20 (MLMPRRVKHRKQHHPTRRGA) are enriched in basic residues. The interval 1–24 (MLMPRRVKHRKQHHPTRRGAAKGG) is disordered.

Belongs to the universal ribosomal protein uL16 family. In terms of assembly, part of the 50S ribosomal subunit.

Functionally, binds 23S rRNA and is also seen to make contacts with the A and possibly P site tRNAs. The polypeptide is Large ribosomal subunit protein uL16 (Nocardioides sp. (strain ATCC BAA-499 / JS614)).